Consider the following 263-residue polypeptide: tRNA dimethylallyltransferase (263 aa).

The protein belongs to the IPP transferase family. In terms of assembly, monomer. Requires Mg(2+) as cofactor.

It catalyses the reaction adenosine(37) in tRNA + dimethylallyl diphosphate = N(6)-dimethylallyladenosine(37) in tRNA + diphosphate. Its function is as follows. Catalyzes the transfer of a dimethylallyl group onto the adenine at position 37 in tRNAs that read codons beginning with uridine, leading to the formation of N6-(dimethylallyl)adenosine (i(6)A). The chain is tRNA dimethylallyltransferase from Leifsonia xyli subsp. xyli (strain CTCB07).